We begin with the raw amino-acid sequence, 93 residues long: Small ribosomal subunit protein uS19 (93 aa).

This sequence belongs to the universal ribosomal protein uS19 family.

In terms of biological role, protein S19 forms a complex with S13 that binds strongly to the 16S ribosomal RNA. This is Small ribosomal subunit protein uS19 from Campylobacter jejuni subsp. jejuni serotype O:6 (strain 81116 / NCTC 11828).